Here is a 401-residue protein sequence, read N- to C-terminus: (1R,4R,5S)-(-)-guaia-6,10(14)-diene synthase (401 aa).

Mg(2+)-binding residues include Asp134 and Glu139. The DDXXD motif signature appears at 134-138 (DDQFD). Arg242 is a binding site for substrate. Mg(2+)-binding residues include Asn288 and Ser292. Lys295 is a substrate binding site. Residue Asp296 participates in Mg(2+) binding. 375–376 (RY) serves as a coordination point for substrate.

Belongs to the terpene synthase family. Mg(2+) is required as a cofactor.

The enzyme catalyses (2E,6E)-farnesyl diphosphate = (1R,4R,5S)-(-)-guaia-6,10(14)-diene + diphosphate. It participates in secondary metabolite biosynthesis; terpenoid biosynthesis. Catalyzes the conversion of (2E,6E)-farnesyl diphosphate (FPP) to yield the bicyclic sesquiterpene guaia-6,10(14)-diene via a 1,10-cyclization, which requires the abstraction of the pyrophosphate from FPP to yield the (E,E)-germacradienyl cation. The only accepted substrate is farnesyl diphosphate (FPP). The sequence is that of (1R,4R,5S)-(-)-guaia-6,10(14)-diene synthase from Fusarium mangiferae (Mango malformation disease fungus).